A 601-amino-acid chain; its full sequence is Molybdenum cofactor synthesis protein cinnamon (601 aa).

Residues 3-153 (SITFGVLTIS…TISALLPHAV (151 aa)) are MPT adenylyltransferase. The disordered stretch occupies residues 173-195 (SAQKSHICPHKTGTGTDSDRNSP). An MPT Mo-transferase region spans residues 184-596 (TGTGTDSDRN…FPASVLRFDF (413 aa)). Serine 376 bears the Phosphoserine mark.

In the N-terminal section; belongs to the MoaB/Mog family. It in the C-terminal section; belongs to the MoeA family. Requires Mg(2+) as cofactor.

It carries out the reaction molybdopterin + ATP + H(+) = adenylyl-molybdopterin + diphosphate. It catalyses the reaction adenylyl-molybdopterin + molybdate = Mo-molybdopterin + AMP + H(+). The protein operates within cofactor biosynthesis; molybdopterin biosynthesis. In terms of biological role, catalyzes two steps in the biosynthesis of the molybdenum cofactor. In the first step, molybdopterin is adenylated. Subsequently, molybdate is inserted into adenylated molybdopterin and AMP is released. The polypeptide is Molybdenum cofactor synthesis protein cinnamon (cin) (Drosophila melanogaster (Fruit fly)).